The primary structure comprises 536 residues: Cytoplasmic dynein 2 intermediate chain 2 (536 aa).

Ser-15 bears the Phosphoserine mark. Residues 80 to 93 are DYNLL2 binding; it reads RNHVDAQVQTEAPV. The DYNLRB1 binding stretch occupies residues 106-131; that stretch reads PRLAAFLRRVEAMVIRELNKNWQSHA. 5 WD repeats span residues 215-255, 264-308, 390-430, 433-473, and 480-520; these read EVPS…DPLL, THTD…QLQL, PHGG…PLTS, LSLK…QKPT, and QDES…TEQG.

It belongs to the dynein light intermediate chain family. As to quaternary structure, the cytoplasmic dynein 2 complex consists of two catalytic heavy chains (HCs) and a number of non-catalytic subunits presented by intermediate chains (ICs), light intermediate chains (LICs) and light chains (LCs). Among them, a heavy chain (DYNC2H1), two intermediate chains (DYNC2I2 and DYNC2I1), a light intermediate chain (DYNC2LI1), and a light chain (DYNLT2B) are unique to the cytoplasmic dynein complex 2, but a subset of the light chains are also shared by dynein-1 and dynein-2 complexes. Interacts with DYNC2I1; their C-terminal domains each bind a copy of the heavy chain, and their extended N-terminal regions are held together by an array of light chain dimers. Interacts with DYNLL2; this interaction is essential for dynein-2-mediated retrograde trafficking of ciliary proteins. Interacts with DYNLRB1; this interaction is essential for dynein-2-mediated retrograde trafficking of ciliary proteins. Interacts (via the WD domains) with MAP3K7 and TAB3. Interacts (via WD domains) with TAB2 (via C-terminus). Interacts (via WD domains) with TRAF6 (via TRAF-type domains). As to expression, expressed in several cell lines (at protein level).

The protein localises to the cytoplasm. Its subcellular location is the cytoskeleton. It is found in the cilium basal body. The protein resides in the cilium axoneme. It localises to the microtubule organizing center. The protein localises to the centrosome. Its subcellular location is the cell projection. It is found in the cilium. The protein resides in the filopodium. In terms of biological role, acts as one of several non-catalytic accessory components of the cytoplasmic dynein 2 complex (dynein-2 complex), a motor protein complex that drives the movement of cargos along microtubules within cilia and flagella in concert with the intraflagellar transport (IFT) system. DYNC2I2 plays a major role in retrograde ciliary protein trafficking and in ciliogenesis. Required also to maintain a functional transition zone. Acts as a negative regulator of the Toll-like and IL-1R receptor signaling pathways. Inhibits the MAP3K7-induced NF-kappa-B activation pathway. Inhibits MAP3K7 phosphorylation at 'Thr-184' and 'Thr-187' upon Il-1 beta stimulation. This is Cytoplasmic dynein 2 intermediate chain 2 from Homo sapiens (Human).